The chain runs to 574 residues: Sulfate adenylyltransferase (574 aa).

Positions 1–169 (MSNPPHGGVL…VEAINKLNHY (169 aa)) are N-terminal. The tract at residues 170–394 (DYVALRYTPA…LRESSRPRST (225 aa)) is catalytic. Q197 provides a ligand contact to sulfate. Residues 197 to 200 (QTRN) and 291 to 294 (GRDH) contribute to the ATP site. Catalysis depends on residues T198, R199, and N200. Sulfate is bound at residue R199. Position 295 (A295) interacts with sulfate. V333 contacts ATP. The allosteric regulation domain; adenylyl-sulfate kinase-like stretch occupies residues 395–574 (QGFTIFLTGY…LETEGFFDRA (180 aa)). 3'-phosphoadenylyl sulfate contacts are provided by residues 434 to 437 (DTVR), R451, 477 to 478 (IA), and R516.

In the N-terminal section; belongs to the sulfate adenylyltransferase family. It in the C-terminal section; belongs to the APS kinase family. As to quaternary structure, homohexamer. Dimer of trimers.

It localises to the cytoplasm. It catalyses the reaction sulfate + ATP + H(+) = adenosine 5'-phosphosulfate + diphosphate. It participates in sulfur metabolism; hydrogen sulfide biosynthesis; sulfite from sulfate: step 1/3. Allosterically inhibited by 3'-phosphoadenosine 5'-phosphosulfate (PAPS). Functionally, catalyzes the first intracellular reaction of sulfate assimilation, forming adenosine-5'-phosphosulfate (APS) from inorganic sulfate and ATP. Plays an important role in sulfate activation as a component of the biosynthesis pathway of sulfur-containing amino acids. The protein is Sulfate adenylyltransferase of Aspergillus clavatus (strain ATCC 1007 / CBS 513.65 / DSM 816 / NCTC 3887 / NRRL 1 / QM 1276 / 107).